We begin with the raw amino-acid sequence, 691 residues long: DNA ligase (691 aa).

NAD(+)-binding positions include 36–40 (DAEYD), 85–86 (SL), and Glu-118. Lys-120 functions as the N6-AMP-lysine intermediate in the catalytic mechanism. Residues Arg-141, Glu-178, Lys-295, and Lys-319 each coordinate NAD(+). Cys-413, Cys-416, Cys-431, and Cys-437 together coordinate Zn(2+). The region spanning 595-684 (GRPQPLAGQT…ESASSEDAQP (90 aa)) is the BRCT domain.

The protein belongs to the NAD-dependent DNA ligase family. LigA subfamily. The cofactor is Mg(2+). Mn(2+) serves as cofactor.

It carries out the reaction NAD(+) + (deoxyribonucleotide)n-3'-hydroxyl + 5'-phospho-(deoxyribonucleotide)m = (deoxyribonucleotide)n+m + AMP + beta-nicotinamide D-nucleotide.. DNA ligase that catalyzes the formation of phosphodiester linkages between 5'-phosphoryl and 3'-hydroxyl groups in double-stranded DNA using NAD as a coenzyme and as the energy source for the reaction. It is essential for DNA replication and repair of damaged DNA. This Chromohalobacter salexigens (strain ATCC BAA-138 / DSM 3043 / CIP 106854 / NCIMB 13768 / 1H11) protein is DNA ligase.